A 374-amino-acid polypeptide reads, in one-letter code: tRNA 2-selenouridine synthase (374 aa).

The region spanning 12-136 is the Rhodanese domain; sequence FLRDVPMLDT…MRGFLLQTID (125 aa). Cys-95 serves as the catalytic S-selanylcysteine intermediate.

It belongs to the SelU family. Monomer.

The catalysed reaction is 5-methylaminomethyl-2-thiouridine(34) in tRNA + selenophosphate + (2E)-geranyl diphosphate + H2O + H(+) = 5-methylaminomethyl-2-selenouridine(34) in tRNA + (2E)-thiogeraniol + phosphate + diphosphate. It carries out the reaction 5-methylaminomethyl-2-thiouridine(34) in tRNA + (2E)-geranyl diphosphate = 5-methylaminomethyl-S-(2E)-geranyl-thiouridine(34) in tRNA + diphosphate. The enzyme catalyses 5-methylaminomethyl-S-(2E)-geranyl-thiouridine(34) in tRNA + selenophosphate + H(+) = 5-methylaminomethyl-2-(Se-phospho)selenouridine(34) in tRNA + (2E)-thiogeraniol. It catalyses the reaction 5-methylaminomethyl-2-(Se-phospho)selenouridine(34) in tRNA + H2O = 5-methylaminomethyl-2-selenouridine(34) in tRNA + phosphate. In terms of biological role, involved in the post-transcriptional modification of the uridine at the wobble position (U34) of tRNA(Lys), tRNA(Glu) and tRNA(Gln). Catalyzes the conversion of 2-thiouridine (S2U-RNA) to 2-selenouridine (Se2U-RNA). Acts in a two-step process involving geranylation of 2-thiouridine (S2U) to S-geranyl-2-thiouridine (geS2U) and subsequent selenation of the latter derivative to 2-selenouridine (Se2U) in the tRNA chain. This Bordetella petrii (strain ATCC BAA-461 / DSM 12804 / CCUG 43448) protein is tRNA 2-selenouridine synthase.